The sequence spans 362 residues: Protein-glutamate methylesterase/protein-glutamine glutaminase 5 (362 aa).

A Response regulatory domain is found at 13–130; that stretch reads RVLVVDDSAL…RRFLEESRVR (118 aa). Position 64 is a 4-aspartylphosphate (Asp-64). The 191-residue stretch at 172 to 362 folds into the CheB-type methylesterase domain; that stretch reads LQTTERVVVV…IPPELLRLCR (191 aa). Residues Ser-184, His-210, and Asp-306 contribute to the active site.

The protein belongs to the CheB family. Phosphorylated by CheA. Phosphorylation of the N-terminal regulatory domain activates the methylesterase activity.

Its subcellular location is the cytoplasm. The catalysed reaction is [protein]-L-glutamate 5-O-methyl ester + H2O = L-glutamyl-[protein] + methanol + H(+). It carries out the reaction L-glutaminyl-[protein] + H2O = L-glutamyl-[protein] + NH4(+). Its function is as follows. Involved in chemotaxis. Part of a chemotaxis signal transduction system that modulates chemotaxis in response to various stimuli. Catalyzes the demethylation of specific methylglutamate residues introduced into the chemoreceptors (methyl-accepting chemotaxis proteins or MCP) by CheR. Also mediates the irreversible deamidation of specific glutamine residues to glutamic acid. This is Protein-glutamate methylesterase/protein-glutamine glutaminase 5 from Anaeromyxobacter dehalogenans (strain 2CP-C).